The primary structure comprises 477 residues: Aspartyl/glutamyl-tRNA(Asn/Gln) amidotransferase subunit B (477 aa).

This sequence belongs to the GatB/GatE family. GatB subfamily. In terms of assembly, heterotrimer of A, B and C subunits.

The catalysed reaction is L-glutamyl-tRNA(Gln) + L-glutamine + ATP + H2O = L-glutaminyl-tRNA(Gln) + L-glutamate + ADP + phosphate + H(+). It catalyses the reaction L-aspartyl-tRNA(Asn) + L-glutamine + ATP + H2O = L-asparaginyl-tRNA(Asn) + L-glutamate + ADP + phosphate + 2 H(+). Its function is as follows. Allows the formation of correctly charged Asn-tRNA(Asn) or Gln-tRNA(Gln) through the transamidation of misacylated Asp-tRNA(Asn) or Glu-tRNA(Gln) in organisms which lack either or both of asparaginyl-tRNA or glutaminyl-tRNA synthetases. The reaction takes place in the presence of glutamine and ATP through an activated phospho-Asp-tRNA(Asn) or phospho-Glu-tRNA(Gln). The polypeptide is Aspartyl/glutamyl-tRNA(Asn/Gln) amidotransferase subunit B (Thioalkalivibrio sulfidiphilus (strain HL-EbGR7)).